A 634-amino-acid chain; its full sequence is Ankyrin repeat and SOCS box protein 2 (634 aa).

The region spanning Ser-26–Gly-45 is the UIM domain. Residues Glu-36–Pro-82 form a disordered region. ANK repeat units lie at residues Ala-104–Glu-133, Glu-137–Gln-167, Gln-171–Ile-200, Ser-204–His-233, Arg-237–Ala-266, Tyr-270–Thr-299, Asp-303–Lys-332, Asp-336–Val-365, Ser-368–Ala-397, Arg-410–Arg-439, Asp-440–Ala-469, and Thr-476–Pro-504. The residue at position 371 (Ser-371) is a Phosphoserine. Residues Glu-580–Gln-634 enclose the SOCS box domain.

The protein belongs to the ankyrin SOCS box (ASB) family. In terms of assembly, component of a probable ECS E3 ubiquitin-protein ligase complex which contains CUL5, either RBX1 or RNF7/RBX2, Elongin BC complex (ELOB and ELOC) and ASB2. Interacts with SKP2. Through its interaction with SKP2, likely to bridge the formation of dimeric E3-ubiquitin-protein ligase complexes composed of an ECS complex and an SCF(SKP2) complex. Interacts with JAK2; the interaction targets JAK2 for Notch-mediated proteasomal degradation. Interacts with TCF3/E2A; the interaction is mediated by SKP2 and targets TCF3 for Notch-mediated proteasomal degradation. Interacts with DES. Post-translationally, monoubiquitinated. Not monoubiquitinated. In terms of processing, phosphorylation at Ser-371 is required for association with FLNA and subsequent FLNA degradation. In terms of tissue distribution, highest expression in muscle, heart and spleen. Highly expressed in cells of the first and second heart fields in the developing embryonic heart. At 9.5 dpc, robust expression predominantly in the left and right ventricles (RV) and to a lower extent in inflow and outflow tracts. At 10.5 and 11.5 dpc, expression is restricted to the myocardium with no expression observed in the endocardium. Not expressed in immature dendritic cells. Highly expressed in adult skeletal muscle with very low levels in adult bone marrow. As to expression, expressed in immature dendritic cells and in primary dendritic cells derived from the spleen. Highly expressed in adult bone marrow with negligible levels in adult skeletal muscle. Expressed at higher levels in T helper type 2 (Th2) cells than in regulatory T (Treg) cells, type 1 helper T (Th1) cells and T helper 17 (Th17) cells.

It localises to the cytoplasm. The protein localises to the cytoskeleton. It is found in the stress fiber. The protein resides in the myofibril. Its subcellular location is the sarcomere. It localises to the z line. It functions in the pathway protein modification; protein ubiquitination. Functionally, substrate-recognition component of a SCF-like ECS (Elongin-Cullin-SOCS-box protein) E3 ubiquitin-protein ligase complex which mediates the ubiquitination and subsequent proteasomal degradation of target proteins. Mediates Notch-induced ubiquitination and degradation of substrates including TCF3/E2A and JAK2. Required during embryonic heart development for complete heart looping. Required for cardiomyocyte differentiation. Specifically promotes the ubiquitination of SMAD9 and targets it for proteasomal degradation, leading to avoid excessive accumulation of SMAD9. Plays a role in the regulation of NK-cell migration by modulating protein levels of filamin A/FLNA via regulation of its ubiquitination and proteasome degradation. Its function is as follows. Involved in myogenic differentiation and targets filamin FLNB for proteasomal degradation but not filamin FLNA. Also targets DES for proteasomal degradation. Acts as a negative regulator of skeletal muscle mass. Targets filamins FLNA and FLNB for proteasomal degradation. This leads to enhanced adhesion of hematopoietic cells to fibronectin. Required for FLNA degradation in immature cardiomyocytes which is necessary for actin cytoskeleton remodeling, leading to proper organization of myofibrils and function of mature cardiomyocytes. Required for degradation of FLNA and FLNB in immature dendritic cells (DC) which enhances immature DC migration by promoting DC podosome formation and DC-mediated degradation of the extracellular matrix. Does not promote proteasomal degradation of tyrosine-protein kinases JAK1 or JAK2 in hematopoietic cells. This Mus musculus (Mouse) protein is Ankyrin repeat and SOCS box protein 2.